A 320-amino-acid chain; its full sequence is Aspartate carbamoyltransferase catalytic subunit (320 aa).

2 residues coordinate carbamoyl phosphate: R53 and T54. K82 contacts L-aspartate. R103, H131, and Q134 together coordinate carbamoyl phosphate. Residues R164 and R227 each contribute to the L-aspartate site. The carbamoyl phosphate site is built by L266 and P267.

It belongs to the aspartate/ornithine carbamoyltransferase superfamily. ATCase family. Heterododecamer (2C3:3R2) of six catalytic PyrB chains organized as two trimers (C3), and six regulatory PyrI chains organized as three dimers (R2).

It carries out the reaction carbamoyl phosphate + L-aspartate = N-carbamoyl-L-aspartate + phosphate + H(+). It participates in pyrimidine metabolism; UMP biosynthesis via de novo pathway; (S)-dihydroorotate from bicarbonate: step 2/3. Functionally, catalyzes the condensation of carbamoyl phosphate and aspartate to form carbamoyl aspartate and inorganic phosphate, the committed step in the de novo pyrimidine nucleotide biosynthesis pathway. The sequence is that of Aspartate carbamoyltransferase catalytic subunit from Bifidobacterium adolescentis (strain ATCC 15703 / DSM 20083 / NCTC 11814 / E194a).